A 239-amino-acid chain; its full sequence is Probable transcriptional regulatory protein BCQ_0605 (239 aa).

The protein belongs to the TACO1 family. YeeN subfamily.

Its subcellular location is the cytoplasm. This Bacillus cereus (strain Q1) protein is Probable transcriptional regulatory protein BCQ_0605.